The following is a 491-amino-acid chain: Glycogen synthase (491 aa).

Position 15 (Lys-15) interacts with ADP-alpha-D-glucose.

The protein belongs to the glycosyltransferase 1 family. Bacterial/plant glycogen synthase subfamily.

It catalyses the reaction [(1-&gt;4)-alpha-D-glucosyl](n) + ADP-alpha-D-glucose = [(1-&gt;4)-alpha-D-glucosyl](n+1) + ADP + H(+). Its pathway is glycan biosynthesis; glycogen biosynthesis. Functionally, synthesizes alpha-1,4-glucan chains using ADP-glucose. This is Glycogen synthase from Treponema denticola (strain ATCC 35405 / DSM 14222 / CIP 103919 / JCM 8153 / KCTC 15104).